A 593-amino-acid polypeptide reads, in one-letter code: Gamma-humulene synthase (593 aa).

The segment covering 1-26 has biased composition (polar residues); the sequence is MAQISESVSPSTDLKSTESSITSNRH. A disordered region spans residues 1 to 34; that stretch reads MAQISESVSPSTDLKSTESSITSNRHGNMWEDDR. Mg(2+)-binding residues include aspartate 343, aspartate 347, aspartate 488, and glutamate 496. The DDXXD motif signature appears at 343 to 347; that stretch reads DDLYD.

This sequence belongs to the terpene synthase family. Tpsd subfamily. Mg(2+) is required as a cofactor. It depends on K(+) as a cofactor.

It is found in the cytoplasm. The catalysed reaction is (2E,6E)-farnesyl diphosphate = gamma-humulene + diphosphate. The enzyme catalyses (2E,6E)-farnesyl diphosphate = sibirene + diphosphate. It catalyses the reaction (2E,6E)-farnesyl diphosphate = longifolene + diphosphate. It carries out the reaction (2E,6E)-farnesyl diphosphate = beta-himachalene + diphosphate. The catalysed reaction is (2E,6E)-farnesyl diphosphate = gamma-himachalene + diphosphate. The enzyme catalyses (2E,6E)-farnesyl diphosphate = alpha-himachalene + diphosphate. It functions in the pathway terpene metabolism; oleoresin biosynthesis. Involved in defensive oleoresin formation in conifers in response to insect attack or other injury. Involved in 52 sesquiterpene (C15) olefins biosynthesis. The protein is Gamma-humulene synthase (ag5) of Abies grandis (Grand fir).